The sequence spans 248 residues: MNVLIVDDEPLARERLARLVGQLDGYRVLEPSASNGEEALTLIDSLKPDIVLLDIRMPGLDGLQVAARLCEREAPPAVIFCTAHDEFALEAFQVSAVGYLVKPVRSEDLAEALKKASRPNRVQLAALTKPPASGGSGPRSHISARTRKGIELIPLEEVIFFIADHKYVTLRHAQGEVLLDEPLKALEDEFGERFVRIHRNALVARERIERLQRTPLGHFQLYLKGLDGDALTVSRRHVAGVRRLMHQL.

One can recognise a Response regulatory domain in the interval 2–117 (NVLIVDDEPL…DLAEALKKAS (116 aa)). Asp54 is modified (4-aspartylphosphate). The HTH LytTR-type domain maps to 142 to 247 (ISARTRKGIE…VAGVRRLMHQ (106 aa)).

It participates in glycan biosynthesis; alginate biosynthesis [regulation]. In terms of biological role, positive regulator of the algD gene, which codes for a GDP-mannose dehydrogenase, a key step enzyme in the alginate biosynthesis pathway. The sequence is that of Positive alginate biosynthesis regulatory protein (algR) from Pseudomonas aeruginosa (strain ATCC 15692 / DSM 22644 / CIP 104116 / JCM 14847 / LMG 12228 / 1C / PRS 101 / PAO1).